Reading from the N-terminus, the 298-residue chain is Elongation factor Ts (298 aa).

The involved in Mg(2+) ion dislocation from EF-Tu stretch occupies residues 79–82; that stretch reads TDFV.

This sequence belongs to the EF-Ts family.

The protein resides in the cytoplasm. In terms of biological role, associates with the EF-Tu.GDP complex and induces the exchange of GDP to GTP. It remains bound to the aminoacyl-tRNA.EF-Tu.GTP complex up to the GTP hydrolysis stage on the ribosome. The chain is Elongation factor Ts (tsf) from Mycoplasma genitalium (strain ATCC 33530 / DSM 19775 / NCTC 10195 / G37) (Mycoplasmoides genitalium).